Consider the following 672-residue polypeptide: MKRINILNEDTANKIAAGEVVERPASVVKELVENAIDANSKNILIEIEEGGSSLIRIIDDGDGIYKEDIEKAFLPHATSKIKESEDIYSINTLGFRGEALPSIASVARVNLKTKQETEECGYEITIEGGKFSEVTECGVNKGTIMEVRDLFFNVPARKKFLKTTSKESSLINDIITRIALSNPNISFKLFNNGKKIIHTYGNGNMKDVIRTIYGKSIVENVLYFEDTSDIATIYGYVGKEAIARGSRNNQSIFVNSRYIKNRSLGIAVEQAFKSFSTVSKFPFFILFIEIYPEYIDVNIHPTKSEVKFNDERFIFKKIFGAVHTSLKEEVFSTFSIPEEVNEAISKNTNLNIEEITFKIEEEQEKVKFNTNHLSQKNICSTQGNNSINKHIYDEKHKTDTNIPLNVNIPVDLKSDHIKLEDDNNSIPNKEVICDNNEVKYESSYTSDSNQYENSCKSDVDKESKSKTTGTSELVKEKIPKFPAIKIIGQYNKTYILGEYAGTLYMIDQHAAHEKIMFEKYLNDIICGDIIIQPLMIPTVIDLSMDDYSYFEENKDVFKEAGFTIEDFGGTSIALKEVPYFLGKLKPKNLFLEILDNLKNLGSGKTTEVKYNAIATKACKSAVKGNDSLDELEMVKLIEELRYIDDPFHCPHGRPTIIQFTSTDIDKKFRRIV.

The span at 443–454 (SYTSDSNQYENS) shows a compositional bias: polar residues. Residues 443–469 (SYTSDSNQYENSCKSDVDKESKSKTTG) form a disordered region. Basic and acidic residues predominate over residues 455–465 (CKSDVDKESKS).

Belongs to the DNA mismatch repair MutL/HexB family.

This protein is involved in the repair of mismatches in DNA. It is required for dam-dependent methyl-directed DNA mismatch repair. May act as a 'molecular matchmaker', a protein that promotes the formation of a stable complex between two or more DNA-binding proteins in an ATP-dependent manner without itself being part of a final effector complex. This Clostridium botulinum (strain Eklund 17B / Type B) protein is DNA mismatch repair protein MutL.